Here is a 622-residue protein sequence, read N- to C-terminus: Glutamyl-tRNA(Gln) amidotransferase subunit B, mitochondrial (622 aa).

The N-terminal 54 residues, 1-54, are a transit peptide targeting the mitochondrion; that stretch reads MSRIPTRELGRYLLQGQICQRGCVASSVSKSRAKQLGRHPLLPHDRHQPTQARH. Positions 30–67 are disordered; the sequence is KSRAKQLGRHPLLPHDRHQPTQARHAHTVTTTATPTQL. Over residues 57–67 the composition is skewed to low complexity; that stretch reads TVTTTATPTQL.

Belongs to the GatB/GatE family. GatB subfamily. Subunit of the heterotrimeric GatCAB amidotransferase (AdT) complex, composed of A, B and C subunits.

The protein resides in the mitochondrion. It catalyses the reaction L-glutamyl-tRNA(Gln) + L-glutamine + ATP + H2O = L-glutaminyl-tRNA(Gln) + L-glutamate + ADP + phosphate + H(+). Its function is as follows. Allows the formation of correctly charged Gln-tRNA(Gln) through the transamidation of misacylated Glu-tRNA(Gln) in the mitochondria. The reaction takes place in the presence of glutamine and ATP through an activated gamma-phospho-Glu-tRNA(Gln). The sequence is that of Glutamyl-tRNA(Gln) amidotransferase subunit B, mitochondrial from Verticillium alfalfae (strain VaMs.102 / ATCC MYA-4576 / FGSC 10136) (Verticillium wilt of alfalfa).